Reading from the N-terminus, the 235-residue chain is uncharacterized protein (235 aa).

This is an uncharacterized protein from Shigella flexneri.